The sequence spans 487 residues: Argininosuccinate lyase (487 aa).

This sequence belongs to the lyase 1 family. Argininosuccinate lyase subfamily.

It is found in the cytoplasm. The enzyme catalyses 2-(N(omega)-L-arginino)succinate = fumarate + L-arginine. Its pathway is amino-acid biosynthesis; L-arginine biosynthesis; L-arginine from L-ornithine and carbamoyl phosphate: step 3/3. In Methanococcus aeolicus (strain ATCC BAA-1280 / DSM 17508 / OCM 812 / Nankai-3), this protein is Argininosuccinate lyase.